Here is a 241-residue protein sequence, read N- to C-terminus: Probable transcriptional regulatory protein Rpic_2388 (241 aa).

It belongs to the TACO1 family.

Its subcellular location is the cytoplasm. In Ralstonia pickettii (strain 12J), this protein is Probable transcriptional regulatory protein Rpic_2388.